Consider the following 186-residue polypeptide: Protein GrpE (186 aa).

The protein belongs to the GrpE family. As to quaternary structure, homodimer.

Its subcellular location is the cytoplasm. Functionally, participates actively in the response to hyperosmotic and heat shock by preventing the aggregation of stress-denatured proteins, in association with DnaK and GrpE. It is the nucleotide exchange factor for DnaK and may function as a thermosensor. Unfolded proteins bind initially to DnaJ; upon interaction with the DnaJ-bound protein, DnaK hydrolyzes its bound ATP, resulting in the formation of a stable complex. GrpE releases ADP from DnaK; ATP binding to DnaK triggers the release of the substrate protein, thus completing the reaction cycle. Several rounds of ATP-dependent interactions between DnaJ, DnaK and GrpE are required for fully efficient folding. This Novosphingobium aromaticivorans (strain ATCC 700278 / DSM 12444 / CCUG 56034 / CIP 105152 / NBRC 16084 / F199) protein is Protein GrpE.